The primary structure comprises 325 residues: tRNA(Ile)-lysidine synthase (325 aa).

Residue 34-39 (SGGADS) coordinates ATP.

It belongs to the tRNA(Ile)-lysidine synthase family.

The protein resides in the cytoplasm. The catalysed reaction is cytidine(34) in tRNA(Ile2) + L-lysine + ATP = lysidine(34) in tRNA(Ile2) + AMP + diphosphate + H(+). Ligates lysine onto the cytidine present at position 34 of the AUA codon-specific tRNA(Ile) that contains the anticodon CAU, in an ATP-dependent manner. Cytidine is converted to lysidine, thus changing the amino acid specificity of the tRNA from methionine to isoleucine. In Rhodococcus opacus (strain B4), this protein is tRNA(Ile)-lysidine synthase.